A 330-amino-acid chain; its full sequence is Phenylalanine--tRNA ligase alpha subunit (330 aa).

E255 contacts Mg(2+).

This sequence belongs to the class-II aminoacyl-tRNA synthetase family. Phe-tRNA synthetase alpha subunit type 1 subfamily. As to quaternary structure, tetramer of two alpha and two beta subunits. Mg(2+) is required as a cofactor.

It is found in the cytoplasm. It carries out the reaction tRNA(Phe) + L-phenylalanine + ATP = L-phenylalanyl-tRNA(Phe) + AMP + diphosphate + H(+). The protein is Phenylalanine--tRNA ligase alpha subunit of Acinetobacter baumannii (strain SDF).